A 376-amino-acid polypeptide reads, in one-letter code: tRNA-specific 2-thiouridylase MnmA (376 aa).

ATP is bound by residues 14–21 (GMSGGVDS) and M40. Positions 100–102 (NPD) are interaction with target base in tRNA. Catalysis depends on C105, which acts as the Nucleophile. A disulfide bond links C105 and C202. G129 is a binding site for ATP. An interaction with tRNA region spans residues 152–154 (KDQ). C202 acts as the Cysteine persulfide intermediate in catalysis. Positions 315–316 (RY) are interaction with tRNA.

Belongs to the MnmA/TRMU family.

The protein resides in the cytoplasm. The catalysed reaction is S-sulfanyl-L-cysteinyl-[protein] + uridine(34) in tRNA + AH2 + ATP = 2-thiouridine(34) in tRNA + L-cysteinyl-[protein] + A + AMP + diphosphate + H(+). Functionally, catalyzes the 2-thiolation of uridine at the wobble position (U34) of tRNA, leading to the formation of s(2)U34. The polypeptide is tRNA-specific 2-thiouridylase MnmA (Lactococcus lactis subsp. cremoris (strain MG1363)).